The following is a 122-amino-acid chain: Large ribosomal subunit protein uL18 (122 aa).

The protein belongs to the universal ribosomal protein uL18 family. In terms of assembly, part of the 50S ribosomal subunit; part of the 5S rRNA/L5/L18/L25 subcomplex. Contacts the 5S and 23S rRNAs.

Its function is as follows. This is one of the proteins that bind and probably mediate the attachment of the 5S RNA into the large ribosomal subunit, where it forms part of the central protuberance. The protein is Large ribosomal subunit protein uL18 of Heliobacterium modesticaldum (strain ATCC 51547 / Ice1).